Consider the following 211-residue polypeptide: Large ribosomal subunit protein uL4 (211 aa).

The segment at 42 to 73 is disordered; sequence NNRQGTHSTKDRSEVRGGGIKPWAQKGTGRAR.

The protein belongs to the universal ribosomal protein uL4 family. As to quaternary structure, part of the 50S ribosomal subunit.

Its function is as follows. One of the primary rRNA binding proteins, this protein initially binds near the 5'-end of the 23S rRNA. It is important during the early stages of 50S assembly. It makes multiple contacts with different domains of the 23S rRNA in the assembled 50S subunit and ribosome. Functionally, forms part of the polypeptide exit tunnel. In Leptospira biflexa serovar Patoc (strain Patoc 1 / Ames), this protein is Large ribosomal subunit protein uL4.